A 176-amino-acid polypeptide reads, in one-letter code: RNA 2',3'-cyclic phosphodiesterase (176 aa).

The Proton donor role is filled by H43. 2 short sequence motifs (HXTX) span residues 43 to 46 and 125 to 128; these read HLTL and HITL. H125 functions as the Proton acceptor in the catalytic mechanism.

It belongs to the 2H phosphoesterase superfamily. ThpR family. As to quaternary structure, monomer.

It catalyses the reaction a 3'-end 2',3'-cyclophospho-ribonucleotide-RNA + H2O = a 3'-end 2'-phospho-ribonucleotide-RNA + H(+). In terms of biological role, hydrolyzes RNA 2',3'-cyclic phosphodiester to an RNA 2'-phosphomonoester. In vitro, can also ligate 5' and 3' half-tRNA molecules with 2',3'-cyclic phosphate and 5'-hydroxyl termini, respectively, to the product containing the 2'-5' phosphodiester linkage. This reaction does not require ATP and is reversible. This chain is RNA 2',3'-cyclic phosphodiesterase, found in Escherichia coli (strain K12).